We begin with the raw amino-acid sequence, 401 residues long: MGRAEKVILAYSGGVDTSVCIPYLQHEWGVKEVITLAVDLGQGDELEPIRQKALDAGASASLVADAKAEFIRNYAFPAIQANALYENRYPLSTALARPLIAKLLVEAATQYGADAVAHGCTGKGNDQVRFDVAIAALNPNLKVLAPAREWGMSREETIAYGERFGIPAPVKKSSPYSIDRNLLGRSIEAGPLEDPWMEPLEEVYWMTQAIEHTPNSPEYVDIGFEAGVPVSLDGRPLDPVTLVSELNERVGRHGFGRIDMIENRLVGIKSREIYEAPGLLVLIDAHRDLESLTLTADVMHYKRGIEETYSRLVYNGLWYSPLKEALDAFIQQTQQRVTGTVRVKLFKGTARVVGRQSPYSLYTPDLATYGAEDQFDHRAAEGFIYVWGLPTRVWAEKLRQG.

10-18 (AYSGGVDTS) is an ATP binding site. Tyr89 is an L-citrulline binding site. Gly119 serves as a coordination point for ATP. Thr121, Asn125, and Asp126 together coordinate L-aspartate. Asn125 lines the L-citrulline pocket. 5 residues coordinate L-citrulline: Arg129, Ser177, Ser186, Glu262, and Tyr274.

The protein belongs to the argininosuccinate synthase family. Type 1 subfamily. Homotetramer.

The protein localises to the cytoplasm. It carries out the reaction L-citrulline + L-aspartate + ATP = 2-(N(omega)-L-arginino)succinate + AMP + diphosphate + H(+). Its pathway is amino-acid biosynthesis; L-arginine biosynthesis; L-arginine from L-ornithine and carbamoyl phosphate: step 2/3. This is Argininosuccinate synthase from Thermosynechococcus vestitus (strain NIES-2133 / IAM M-273 / BP-1).